The sequence spans 498 residues: Calcium uptake protein, mitochondrial (498 aa).

The N-terminal 29 residues, 1–29, are a transit peptide targeting the mitochondrion; sequence MPALSHYRSVSSLPSVDRSFLLIQRLRIH. EF-hand domains are found at residues 216–241, 243–278, 329–364, and 437–472; these read EFFM…VTLL, IPES…MRSQ, LTEE…AADA, and LSDN…RERD. Residues aspartate 222, aspartate 224, aspartate 226, glutamate 233, aspartate 256, aspartate 258, asparagine 260, glutamate 262, and glutamate 267 each coordinate Ca(2+). Ca(2+) contacts are provided by aspartate 450, asparagine 452, aspartate 454, asparagine 456, and glutamate 461.

This sequence belongs to the MICU1 family. MICU1 subfamily. As to expression, expressed in both green and non-green tissues, including roots, shoots, floral buds and pollen.

The protein resides in the mitochondrion inner membrane. It is found in the mitochondrion intermembrane space. In terms of biological role, calcium-binding protein maintaining matrix calcium levels at low concentration. Regulates mitochondrial calcium dynamics in planta by restricting influx. This is Calcium uptake protein, mitochondrial from Arabidopsis thaliana (Mouse-ear cress).